Reading from the N-terminus, the 305-residue chain is tRNA pseudouridine synthase B (305 aa).

Aspartate 48 serves as the catalytic Nucleophile.

This sequence belongs to the pseudouridine synthase TruB family. Type 1 subfamily.

The enzyme catalyses uridine(55) in tRNA = pseudouridine(55) in tRNA. Functionally, responsible for synthesis of pseudouridine from uracil-55 in the psi GC loop of transfer RNAs. The polypeptide is tRNA pseudouridine synthase B (Stutzerimonas stutzeri (strain A1501) (Pseudomonas stutzeri)).